The chain runs to 290 residues: Pyridoxal kinase PdxY (290 aa).

Residues serine 12 and 47–48 (TQ) contribute to the substrate site. Residues aspartate 114, glutamate 151, lysine 184, and 211–214 (RPLL) each bind ATP. Residue aspartate 225 participates in substrate binding.

Belongs to the pyridoxine kinase family. PdxY subfamily. Homodimer. Requires Mg(2+) as cofactor.

The catalysed reaction is pyridoxal + ATP = pyridoxal 5'-phosphate + ADP + H(+). Its pathway is cofactor metabolism; pyridoxal 5'-phosphate salvage; pyridoxal 5'-phosphate from pyridoxal: step 1/1. In terms of biological role, pyridoxal kinase involved in the salvage pathway of pyridoxal 5'-phosphate (PLP). Catalyzes the phosphorylation of pyridoxal to PLP. The chain is Pyridoxal kinase PdxY from Pseudomonas fluorescens (strain SBW25).